The sequence spans 67 residues: Small ribosomal subunit protein bS21 (67 aa).

It belongs to the bacterial ribosomal protein bS21 family.

The chain is Small ribosomal subunit protein bS21 from Desulfovibrio desulfuricans (strain ATCC 27774 / DSM 6949 / MB).